Reading from the N-terminus, the 399-residue chain is Elongation factor Tu (399 aa).

The tr-type G domain maps to 10 to 209 (KPHVNIGTIG…AVDDYIPTPA (200 aa)). A G1 region spans residues 19-26 (GHVDHGKT). Position 19-26 (19-26 (GHVDHGKT)) interacts with GTP. Residue Thr-26 participates in Mg(2+) binding. Residues 60-64 (GITIA) form a G2 region. The G3 stretch occupies residues 81–84 (DCPG). Residues 81–85 (DCPGH) and 136–139 (NKAD) each bind GTP. A G4 region spans residues 136–139 (NKAD). Positions 174 to 176 (SAL) are G5.

It belongs to the TRAFAC class translation factor GTPase superfamily. Classic translation factor GTPase family. EF-Tu/EF-1A subfamily. As to quaternary structure, monomer.

It localises to the cytoplasm. The catalysed reaction is GTP + H2O = GDP + phosphate + H(+). In terms of biological role, GTP hydrolase that promotes the GTP-dependent binding of aminoacyl-tRNA to the A-site of ribosomes during protein biosynthesis. This is Elongation factor Tu from Campylobacter lari (strain RM2100 / D67 / ATCC BAA-1060).